We begin with the raw amino-acid sequence, 282 residues long: ATP phosphoribosyltransferase (282 aa).

It belongs to the ATP phosphoribosyltransferase family. Long subfamily. Requires Mg(2+) as cofactor.

It is found in the cytoplasm. The enzyme catalyses 1-(5-phospho-beta-D-ribosyl)-ATP + diphosphate = 5-phospho-alpha-D-ribose 1-diphosphate + ATP. Its pathway is amino-acid biosynthesis; L-histidine biosynthesis; L-histidine from 5-phospho-alpha-D-ribose 1-diphosphate: step 1/9. With respect to regulation, feedback inhibited by histidine. Functionally, catalyzes the condensation of ATP and 5-phosphoribose 1-diphosphate to form N'-(5'-phosphoribosyl)-ATP (PR-ATP). Has a crucial role in the pathway because the rate of histidine biosynthesis seems to be controlled primarily by regulation of HisG enzymatic activity. This is ATP phosphoribosyltransferase from Halobacterium salinarum (strain ATCC 29341 / DSM 671 / R1).